The primary structure comprises 616 residues: Nucleoprotein (616 aa).

2 consecutive short sequence motifs (nuclear localization signal) follow at residues 230 to 233 (RPKR) and 473 to 476 (KPKK).

As to quaternary structure, homomultimerizes to form the nucleocapsid. Binds to viral genomic RNA. Protein-RNA contacts are mediated by a combination of electrostatic interactions between positively charged residues and the phosphate backbone and planar interactions between aromatic side chains and bases.

It localises to the virion. Its subcellular location is the host nucleus. The protein resides in the host nucleolus. Its function is as follows. Encapsidates the negative strand viral RNA, protecting it from nucleases. The encapsidated genomic RNA is termed the ribonucleoprotein (RNP) and serves as template for transcription and replication. The protein is Nucleoprotein of Gadus morhua (Atlantic cod).